Here is a 158-residue protein sequence, read N- to C-terminus: Na(+)/H(+) antiporter subunit E (158 aa).

2 consecutive transmembrane segments (helical) span residues 22–41 (YTAV…LFVL) and 54–76 (IWAI…IDVI).

It belongs to the CPA3 antiporters (TC 2.A.63) subunit E family. In terms of assembly, forms a heterooligomeric complex that consists of seven subunits: MrpA, MrpB, MrpC, MrpD, MrpE, MrpF and MrpG.

It localises to the cell membrane. Functionally, mnh complex is a Na(+)Li(+)/H(+) antiporter involved in Na(+) and/or Li(+) excretion and Na(+) resistance. Na(+)/H(+) antiport consumes a transmembrane electrical potential, and is thus inferred to be electrogenic. Does not transport K(+), Ca(2+) or Mg(2+). Mrp complex is a Na(+)/H(+) antiporter involved in Na(+) excretion and Na(+) resistance. In Alkalihalophilus pseudofirmus (strain ATCC BAA-2126 / JCM 17055 / OF4) (Bacillus pseudofirmus), this protein is Na(+)/H(+) antiporter subunit E (mrpE).